Consider the following 365-residue polypeptide: MALTLSTTKTFTNINCSNNTSNITTFKPLKLPLFWPWQKVKMGPLSVSPMGFGTWAWGNQLLWGYQTSMDDQLQQAFELALENGINLFDTADSYGTGRLNGQSERLLGKFIKESQGLKGKQNEVVVATKFAAYPWRLTSGQFVNACRASLDRLQIDQLGIGQLHWSTASYAPLQELVLWDGLVQMYEKGLVRAVGVSNYGPQQLVKIHDYLKTRGVPLCSAQVQFSLLSMGKEQLEIKSICDELGIRLISYSPLGLGMLTGKYSSSKLPTGPRSLLFRQILPGLEPLLLALSEIAKKRGKTMPQVAINWCICKGTVPIPGIKSVRHVEDNLGALGWKLTNDEQLQLEYAAKESPKSMIQNIFQTR.

Residues 1–15 (MALTLSTTKTFTNIN) constitute a chloroplast transit peptide. Catalysis depends on tyrosine 94, which acts as the Proton donor.

It belongs to the aldo/keto reductase family. Monomer. Expressed in cotyledons, embryos, flowers, shoots, roots and seeds.

The protein localises to the plastid. Its subcellular location is the chloroplast. It catalyses the reaction pyridoxine + NADP(+) = pyridoxal + NADPH + H(+). Its pathway is cofactor degradation; B6 vitamer degradation; pyridoxal from pyridoxine (dehydrogenase route): step 1/1. Its function is as follows. Catalyzes the reduction of pyridoxal (PL) with NADPH and oxidation of pyridoxine (PN) with NADP(+). Involved in the PLP salvage pathway. In Arabidopsis thaliana (Mouse-ear cress), this protein is Pyridoxal reductase, chloroplastic (PLR1).